The chain runs to 313 residues: Beta-ketoacyl-[acyl-carrier-protein] synthase III (313 aa).

Residues cysteine 112 and histidine 238 contribute to the active site. Residues 239 to 243 are ACP-binding; that stretch reads QANIR. The active site involves asparagine 268.

Belongs to the thiolase-like superfamily. FabH family. As to quaternary structure, homodimer.

The protein resides in the cytoplasm. The enzyme catalyses malonyl-[ACP] + acetyl-CoA + H(+) = 3-oxobutanoyl-[ACP] + CO2 + CoA. It participates in lipid metabolism; fatty acid biosynthesis. Its function is as follows. Catalyzes the condensation reaction of fatty acid synthesis by the addition to an acyl acceptor of two carbons from malonyl-ACP. Catalyzes the first condensation reaction which initiates fatty acid synthesis and may therefore play a role in governing the total rate of fatty acid production. Possesses both acetoacetyl-ACP synthase and acetyl transacylase activities. Its substrate specificity determines the biosynthesis of branched-chain and/or straight-chain of fatty acids. In Staphylococcus epidermidis (strain ATCC 35984 / DSM 28319 / BCRC 17069 / CCUG 31568 / BM 3577 / RP62A), this protein is Beta-ketoacyl-[acyl-carrier-protein] synthase III.